Here is a 497-residue protein sequence, read N- to C-terminus: Probable malate:quinone oxidoreductase (497 aa).

Belongs to the MQO family. FAD is required as a cofactor.

The catalysed reaction is (S)-malate + a quinone = a quinol + oxaloacetate. The protein operates within carbohydrate metabolism; tricarboxylic acid cycle; oxaloacetate from (S)-malate (quinone route): step 1/1. In Flavobacterium johnsoniae (strain ATCC 17061 / DSM 2064 / JCM 8514 / BCRC 14874 / CCUG 350202 / NBRC 14942 / NCIMB 11054 / UW101) (Cytophaga johnsonae), this protein is Probable malate:quinone oxidoreductase.